Reading from the N-terminus, the 45-residue chain is Photosystem II reaction center protein K (45 aa).

The propeptide occupies 1-8 (MDVNFLLS). A helical membrane pass occupies residues 20–40 (IVDVMPAIPVFFLLLAFVWQA).

It belongs to the PsbK family. As to quaternary structure, PSII is composed of 1 copy each of membrane proteins PsbA, PsbB, PsbC, PsbD, PsbE, PsbF, PsbH, PsbI, PsbJ, PsbK, PsbL, PsbM, PsbT, PsbX, PsbY, PsbZ, Psb30/Ycf12, at least 3 peripheral proteins of the oxygen-evolving complex and a large number of cofactors. It forms dimeric complexes.

The protein resides in the plastid. Its subcellular location is the chloroplast thylakoid membrane. Its function is as follows. One of the components of the core complex of photosystem II (PSII). PSII is a light-driven water:plastoquinone oxidoreductase that uses light energy to abstract electrons from H(2)O, generating O(2) and a proton gradient subsequently used for ATP formation. It consists of a core antenna complex that captures photons, and an electron transfer chain that converts photonic excitation into a charge separation. In Emiliania huxleyi (Coccolithophore), this protein is Photosystem II reaction center protein K.